The sequence spans 431 residues: Phosphoribosylamine--glycine ligase (431 aa).

The ATP-grasp domain occupies 107-315 (RWLMEEYKIP…LVEIGEEIVD (209 aa)). ATP is bound at residue 134–193 (IDDFGRPVVVKPLGLTGGKGVKVVGYQLKDNEEAKAYAEELIKRDGKVLIEERTDGVEFT). Mg(2+)-binding residues include glutamine 273, glutamate 285, and asparagine 287. Mn(2+) contacts are provided by glutamine 273, glutamate 285, and asparagine 287.

The protein belongs to the GARS family. The cofactor is Mg(2+). It depends on Mn(2+) as a cofactor.

It carries out the reaction 5-phospho-beta-D-ribosylamine + glycine + ATP = N(1)-(5-phospho-beta-D-ribosyl)glycinamide + ADP + phosphate + H(+). It participates in purine metabolism; IMP biosynthesis via de novo pathway; N(1)-(5-phospho-D-ribosyl)glycinamide from 5-phospho-alpha-D-ribose 1-diphosphate: step 2/2. In Thermococcus kodakarensis (strain ATCC BAA-918 / JCM 12380 / KOD1) (Pyrococcus kodakaraensis (strain KOD1)), this protein is Phosphoribosylamine--glycine ligase.